The primary structure comprises 402 residues: WAT1-related protein At5g07050 (402 aa).

The next 10 membrane-spanning stretches (helical) occupy residues 20–40 (FAMI…KISL), 48–68 (VLVV…AFFF), 74–94 (PKIT…GPVI), 109–129 (TFSC…AVLF), 149–169 (VVTV…VELF), 196–216 (FLKG…LFVL), 229–249 (LSLT…VTFV), 266–286 (LAAA…QGIV), 293–313 (VFAT…GSFV), and 318–338 (IFLG…AVLW). 2 consecutive EamA domains span residues 29 to 159 (YAGM…MLMT) and 208 to 337 (LAWA…YAVL).

The protein belongs to the drug/metabolite transporter (DMT) superfamily. Plant drug/metabolite exporter (P-DME) (TC 2.A.7.4) family.

It is found in the membrane. The sequence is that of WAT1-related protein At5g07050 from Arabidopsis thaliana (Mouse-ear cress).